Reading from the N-terminus, the 155-residue chain is Small ribosomal subunit protein uS7cz/uS7cy (155 aa).

The protein belongs to the universal ribosomal protein uS7 family. As to quaternary structure, part of the 30S ribosomal subunit.

It localises to the plastid. Its subcellular location is the chloroplast. One of the primary rRNA binding proteins, it binds directly to 16S rRNA where it nucleates assembly of the head domain of the 30S subunit. This chain is Small ribosomal subunit protein uS7cz/uS7cy (rps7-A), found in Phaseolus vulgaris (Kidney bean).